The chain runs to 430 residues: Enolase (430 aa).

Residue Gln-163 coordinates (2R)-2-phosphoglycerate. Residue Glu-205 is the Proton donor of the active site. Mg(2+) is bound by residues Asp-242, Glu-288, and Asp-315. 4 residues coordinate (2R)-2-phosphoglycerate: Lys-340, Arg-369, Ser-370, and Lys-391. The active-site Proton acceptor is Lys-340.

This sequence belongs to the enolase family. Requires Mg(2+) as cofactor.

The protein resides in the cytoplasm. It localises to the secreted. It is found in the cell surface. The enzyme catalyses (2R)-2-phosphoglycerate = phosphoenolpyruvate + H2O. It functions in the pathway carbohydrate degradation; glycolysis; pyruvate from D-glyceraldehyde 3-phosphate: step 4/5. Functionally, catalyzes the reversible conversion of 2-phosphoglycerate (2-PG) into phosphoenolpyruvate (PEP). It is essential for the degradation of carbohydrates via glycolysis. The polypeptide is Enolase (Onion yellows phytoplasma (strain OY-M)).